The primary structure comprises 805 residues: Polyribonucleotide nucleotidyltransferase (805 aa).

Residues Asp-491 and Asp-497 each coordinate Mg(2+). The region spanning 558-617 (PRMESMIIDKNKIKNVIGTGGKNVREICEKTGVKIEISQDGTVMIYAVSRDAVEEAKNMI) is the KH domain. Residues 627–694 (GKVFSGVISE…DKDHVQLSMR (68 aa)) form the S1 motif domain. The disordered stretch occupies residues 702–805 (DLLEHESYSS…GGGNKKPRFF (104 aa)). Positions 709 to 721 (YSSSKKNGPQSGD) are enriched in polar residues.

It belongs to the polyribonucleotide nucleotidyltransferase family. Mg(2+) serves as cofactor.

The protein resides in the cytoplasm. It carries out the reaction RNA(n+1) + phosphate = RNA(n) + a ribonucleoside 5'-diphosphate. Its function is as follows. Involved in mRNA degradation. Catalyzes the phosphorolysis of single-stranded polyribonucleotides processively in the 3'- to 5'-direction. This is Polyribonucleotide nucleotidyltransferase from Anaplasma marginale (strain St. Maries).